The primary structure comprises 498 residues: Type VI secretion system sheath protein TssC1 (498 aa).

As to quaternary structure, forms a heterodimer with TssB1. Heterodimers assemble to form the sheath of the T6SS machinery. Interacts with TssA1.

Core component of the H1 type VI (H1-T6SS) secretion system that plays a role in the release of toxins targeting both eukaryotic and prokaryotic species. Forms the sheath of the structure by assembling into tubules together with TssB1 resulting in the stacking of cogwheel-like structures showing predominantly a 12-fold symmetry. The sheath contracts to provide the energy needed for effector delivery. This Pseudomonas aeruginosa (strain ATCC 15692 / DSM 22644 / CIP 104116 / JCM 14847 / LMG 12228 / 1C / PRS 101 / PAO1) protein is Type VI secretion system sheath protein TssC1.